Here is a 212-residue protein sequence, read N- to C-terminus: Large ribosomal subunit protein uL1 (212 aa).

This sequence belongs to the universal ribosomal protein uL1 family. As to quaternary structure, part of the 50S ribosomal subunit.

Functionally, binds directly to 23S rRNA. Probably involved in E site tRNA release. In terms of biological role, protein L1 is also a translational repressor protein, it controls the translation of its operon by binding to its mRNA. The chain is Large ribosomal subunit protein uL1 from Haloferax volcanii (strain ATCC 29605 / DSM 3757 / JCM 8879 / NBRC 14742 / NCIMB 2012 / VKM B-1768 / DS2) (Halobacterium volcanii).